Consider the following 28-residue polypeptide: Phospholipase A2 pseudexin C chain (28 aa).

Tyrosine 28 is a binding site for Ca(2+).

It belongs to the phospholipase A2 family. Group I subfamily. Requires Ca(2+) as cofactor. As to expression, expressed by the venom gland.

Its subcellular location is the secreted. The enzyme catalyses a 1,2-diacyl-sn-glycero-3-phosphocholine + H2O = a 1-acyl-sn-glycero-3-phosphocholine + a fatty acid + H(+). Its function is as follows. PLA2 catalyzes the calcium-dependent hydrolysis of the 2-acyl groups in 3-sn-phosphoglycerides. The chain is Phospholipase A2 pseudexin C chain from Pseudechis porphyriacus (Red-bellied black snake).